A 300-amino-acid polypeptide reads, in one-letter code: Ribonuclease HIII (300 aa).

An RNase H type-2 domain is found at 83 to 300 (IPIIGSDEVG…THKAQALLTK (218 aa)). Residues aspartate 89, glutamate 90, and aspartate 194 each contribute to the a divalent metal cation site.

This sequence belongs to the RNase HII family. RnhC subfamily. Mn(2+) serves as cofactor. The cofactor is Mg(2+).

It is found in the cytoplasm. The catalysed reaction is Endonucleolytic cleavage to 5'-phosphomonoester.. In terms of biological role, endonuclease that specifically degrades the RNA of RNA-DNA hybrids. This is Ribonuclease HIII from Streptococcus pyogenes serotype M2 (strain MGAS10270).